Here is a 358-residue protein sequence, read N- to C-terminus: Phospho-N-acetylmuramoyl-pentapeptide-transferase (358 aa).

10 helical membrane-spanning segments follow: residues 13–47 (LFIL…SIFI), 81–101 (MGGI…TINL), 106–126 (LILL…DDYL), 148–168 (ISII…LITI), 171–191 (SWAI…LVGI), 201–221 (LDGL…TEIL), 228–248 (LFVF…FLKY), 255–275 (IFMG…IALL), 278–298 (SIFT…SVII), and 336–356 (IVEN…VLKI).

This sequence belongs to the glycosyltransferase 4 family. MraY subfamily. The cofactor is Mg(2+).

It localises to the cell inner membrane. It catalyses the reaction UDP-N-acetyl-alpha-D-muramoyl-L-alanyl-gamma-D-glutamyl-meso-2,6-diaminopimeloyl-D-alanyl-D-alanine + di-trans,octa-cis-undecaprenyl phosphate = di-trans,octa-cis-undecaprenyl diphospho-N-acetyl-alpha-D-muramoyl-L-alanyl-D-glutamyl-meso-2,6-diaminopimeloyl-D-alanyl-D-alanine + UMP. Its pathway is cell wall biogenesis; peptidoglycan biosynthesis. Catalyzes the initial step of the lipid cycle reactions in the biosynthesis of the cell wall peptidoglycan: transfers peptidoglycan precursor phospho-MurNAc-pentapeptide from UDP-MurNAc-pentapeptide onto the lipid carrier undecaprenyl phosphate, yielding undecaprenyl-pyrophosphoryl-MurNAc-pentapeptide, known as lipid I. The chain is Phospho-N-acetylmuramoyl-pentapeptide-transferase from Prochlorococcus marinus (strain MIT 9301).